A 143-amino-acid chain; its full sequence is Large ribosomal subunit protein uL13 (143 aa).

It belongs to the universal ribosomal protein uL13 family. In terms of assembly, part of the 50S ribosomal subunit.

In terms of biological role, this protein is one of the early assembly proteins of the 50S ribosomal subunit, although it is not seen to bind rRNA by itself. It is important during the early stages of 50S assembly. The protein is Large ribosomal subunit protein uL13 of Carboxydothermus hydrogenoformans (strain ATCC BAA-161 / DSM 6008 / Z-2901).